Consider the following 518-residue polypeptide: Probable alginate O-acetylase AlgI (518 aa).

8 helical membrane-spanning segments follow: residues 2 to 24 (VFSS…YLSG), 39 to 61 (FYAW…NYWI), 78 to 100 (WLLL…NFGV), 115 to 137 (FILT…ISYI), 150 to 172 (NLID…VLRF), 319 to 341 (GLWH…WLAI), 354 to 373 (FNVI…WVIF), and 402 to 424 (ASLT…FFGL). Histidine 322 is an active-site residue. The tract at residues 435–456 (SGKSARADGPATEQPGTIKAVP) is disordered. The helical transmembrane segment at 493–515 (LILLLFVASILKLSAQSFSPFLY) threads the bilayer.

It belongs to the membrane-bound acyltransferase family.

Its subcellular location is the cell inner membrane. Its pathway is glycan biosynthesis; alginate biosynthesis. In terms of biological role, together with AlgJ and AlgF, forms an inner membrane complex which probably interacts with the alginate polymerization-transport complex and adds acetyl groups at the O-2 and O-3 positions of mannuronate residues. Acetylation of alginate is important for the architecture of biofilms and increases the ability of alginate to act as a defense barrier. The chain is Probable alginate O-acetylase AlgI (algI) from Pseudomonas syringae pv. tomato (strain ATCC BAA-871 / DC3000).